A 427-amino-acid chain; its full sequence is Putative dipeptidase MCYG_02918 (427 aa).

A signal peptide spans 1–29 (MAPERRSRLSDAGILVSLLALTSLVPVQA). Positions 55, 57, and 167 each coordinate Zn(2+). Cysteines 106 and 196 form a disulfide. Position 194 (His-194) interacts with substrate. Zn(2+) is bound by residues His-238 and His-259. Substrate contacts are provided by Arg-270 and Asp-330. The N-linked (GlcNAc...) asparagine glycan is linked to Asn-402.

It belongs to the metallo-dependent hydrolases superfamily. Peptidase M19 family. Requires Zn(2+) as cofactor.

It catalyses the reaction an L-aminoacyl-L-amino acid + H2O = 2 an L-alpha-amino acid. Its function is as follows. Hydrolyzes a wide range of dipeptides. The chain is Putative dipeptidase MCYG_02918 from Arthroderma otae (strain ATCC MYA-4605 / CBS 113480) (Microsporum canis).